A 79-amino-acid polypeptide reads, in one-letter code: Large ribosomal subunit protein bL31 (79 aa).

The protein belongs to the bacterial ribosomal protein bL31 family. Type A subfamily. As to quaternary structure, part of the 50S ribosomal subunit.

Binds the 23S rRNA. This Synechococcus sp. (strain CC9902) protein is Large ribosomal subunit protein bL31.